Here is a 316-residue protein sequence, read N- to C-terminus: Olfactory receptor 2T11 (316 aa).

Topologically, residues 1–22 (MTNTSSSDFTLLGLLVNSEAAG) are extracellular. The N-linked (GlcNAc...) asparagine glycan is linked to asparagine 3. Residues 23–46 (IVFTVILAVFLGAVTANLVMIFLI) traverse the membrane as a helical segment. Topologically, residues 47-54 (QVDSRLHT) are cytoplasmic. A helical membrane pass occupies residues 55-76 (PMYFLLSQLSIMDTLFICTTVP). Residues 77 to 97 (KLLADMVSKEKIISFVACGIQ) are Extracellular-facing. Residues cysteine 94 and cysteine 186 are joined by a disulfide bond. The helical transmembrane segment at 98–117 (IFLYLTMIGSEFFLLGLMAY) threads the bilayer. Residues 118 to 136 (DCYVAVCNPLRYPVLMNRK) lie on the Cytoplasmic side of the membrane. A helical transmembrane segment spans residues 137-155 (KCLLLAAGAWFGGSLDGFL). The Extracellular segment spans residues 156-192 (LTPITMNVPYCGSRSINHFFCEIPAVLKLACADTSLY). A helical membrane pass occupies residues 193-216 (ETLMYICCVLMLLIPISIISTSYS). The Cytoplasmic segment spans residues 217–233 (LILLTIHRMPSAEGRKK). A helical transmembrane segment spans residues 234–256 (AFTTCSSHLTVVSIFYGAAFYTY). Residues 257–269 (VLPQSFHTPEQDK) are Extracellular-facing. The helical transmembrane segment at 270–289 (VVSAFYTIVTPMLNPLIYSL) threads the bilayer. At 290 to 316 (RNKDVIGAFKKVFACCSSAQKVATSDA) the chain is on the cytoplasmic side.

Belongs to the G-protein coupled receptor 1 family.

Its subcellular location is the cell membrane. In terms of biological role, odorant receptor. This chain is Olfactory receptor 2T11 (OR2T11), found in Homo sapiens (Human).